The following is a 1118-amino-acid chain: Sodium-driven chloride bicarbonate exchanger (1118 aa).

2 disordered regions span residues 1–23 (MEIK…EEAV) and 58–97 (GRKS…TPSQ). Over 1–509 (MEIKDQGAQM…DFRDAFSLQC (509 aa)) the chain is Cytoplasmic. The span at 59–76 (RKSHRRHRHRGHKHRKRD) shows a compositional bias: basic residues. The segment covering 77–90 (RERDSGLEDGRESP) has biased composition (basic and acidic residues). Position 89 is a phosphoserine (Ser-89). Thr-94 carries the post-translational modification Phosphothreonine. Positions 221 and 223 each coordinate Zn(2+). 2 disordered regions span residues 269–310 (AENK…KGPP) and 457–476 (NGTA…GPEL). Position 276 is a phosphoserine (Ser-276). A helical membrane pass occupies residues 510 to 530 (LASFLFLYCACMSPVITFGGL). Over 531–538 (LGEATEGR) the chain is Extracellular. Residues 539-559 (ISAIESLFGASMTGIAYSLFG) traverse the membrane as a helical segment. At 560-562 (GQP) the chain is on the cytoplasmic side. A helical membrane pass occupies residues 563–583 (LTILGSTGPVLVFEKILFKFC). Residues 584–596 (KEYGLSYLSLRAS) are Extracellular-facing. The helical transmembrane segment at 597 to 617 (IGLWTATLCIILVATDASSLV) threads the bilayer. Topologically, residues 618–626 (CYITRFTEE) are cytoplasmic. A helical membrane pass occupies residues 627–647 (AFASLICIIFIYEALEKLFEL). Residues 648-720 (SETYPINMHN…VGRACGHGHP (73 aa)) are Extracellular-facing. N-linked (GlcNAc...) asparagine glycosylation is found at Asn-677, Asn-687, and Asn-697. Residues 721-741 (YVPDVLFWSVILFFSTVTMSA) traverse the membrane as a helical segment. Residues 742 to 762 (TLKQFKTSRYFPTKVRSIVSD) lie on the Cytoplasmic side of the membrane. The chain crosses the membrane as a helical span at residues 763-783 (FAVFLTILCMVLIDYAIGIPS). At 784–809 (PKLQVPSVFKPTRDDRGWFVTPLGPN) the chain is on the extracellular side. A helical transmembrane segment spans residues 810 to 830 (PWWTIIAAIIPALLCTILIFM). Over 831–855 (DQQITAVIINRKEHKLKKGCGYHLD) the chain is Cytoplasmic. The chain crosses the membrane as a helical span at residues 856 to 876 (LLMVAVMLGVCSIMGLPWFVA). The Extracellular segment spans residues 877-912 (ATVLSITHVNSLKLESECSAPGEQPKFLGIREQRVT). Residues 913–933 (GLMIFILMGSSVFMTSILKFI) form a helical membrane-spanning segment. Residues 934–935 (PM) are Cytoplasmic-facing. The chain crosses the membrane as a helical span at residues 936 to 956 (PVLYGVFLYMGASSLKGIQLF). Topologically, residues 957-998 (DRIKLFWMPAKHQPDFIYLRHVPLRKVHLFTVIQMSCLGLLW) are extracellular. A helical membrane pass occupies residues 999-1019 (IIKVSRAAIVFPMMVLALVFV). At 1020 to 1118 (RKLMDFLFTK…SRFPSKSSPS (99 aa)) the chain is on the cytoplasmic side. Ser-1057 and Ser-1085 each carry phosphoserine.

This sequence belongs to the anion exchanger (TC 2.A.31) family. Post-translationally, N-glycosylated. As to expression, in the brain, detected in cerebral cortex, subcortex, cerebellum, hippocampus and medulla (at protein level). In the cerebrum, expressed at high levels throughout the cortex, at lower levels in striatum and not detectable in the corpus callosum (at protein level). In the cerebellum, detected at high levels in the molecular layer but at very low levels in the granular layer (at protein level). In the central nervous system, detected in neurons in the olfactory bulb, cortex and cerebellum (at protein level). Within the hippocampus, abundantly expressed in CA3 pyramidal cells (at protein level). Strongly expressed in the retina with high levels in bipolar and amacrine cells (at protein level). Expressed in the epithelial cells of the choroid plexus. During embryonic development, expressed in neurons of the central nervous system. Also expressed in the peripheral nervous system and in non-neuronal tissues such as the dura and some epithelia including the acid-secreting epithelium of the stomach and the duodenal epithelium. In the embryonic retina, expression is restricted to the neuronal cell layer and the retinal pigment epithelium. Expressed at high levels in brain and at low levels in the pituitary, testis, kidney and ileum. Also expressed in pancreatic islets.

It localises to the basolateral cell membrane. The protein resides in the apical cell membrane. Its subcellular location is the cell projection. It is found in the dendrite. The protein localises to the axon. It localises to the perikaryon. The protein resides in the presynapse. Its subcellular location is the postsynapse. It catalyses the reaction 2 hydrogencarbonate(out) + chloride(in) + Na(+)(out) = 2 hydrogencarbonate(in) + chloride(out) + Na(+)(in). With respect to regulation, zinc-binding negatively regulates its activity. Functionally, sodium/bicarbonate cotransporter which plays an important role in regulating intracellular pH. Has been shown to act as a sodium/bicarbonate cotransporter in exchange for intracellular chloride. Has also been shown to act as a sodium/biocarbonate cotransporter which is not responsible for net efflux of chloride, with the observed chloride efflux being due to chloride self-exchange. Controls neuronal pH and may contribute to the secretion of cerebrospinal fluid. Acting on presynaptic intracellular pH, it promotes GABA release, reduces the excitability of CA1 pyramidal neurons, and modulates short-term synaptic plasticity. Required in retinal cells to maintain normal pH which is necessary for normal vision. In the kidney, likely to mediate bicarbonate reclamation in the apical membrane of the proximal tubules. Its function is as follows. Sodium/bicarbonate cotransporter which mediates cotransport of sodium and bicarbonate in association with an efflux of intracellular chloride. The chain is Sodium-driven chloride bicarbonate exchanger from Mus musculus (Mouse).